The following is a 210-amino-acid chain: Imidazoleglycerol-phosphate dehydratase (210 aa).

Belongs to the imidazoleglycerol-phosphate dehydratase family.

It carries out the reaction D-erythro-1-(imidazol-4-yl)glycerol 3-phosphate = 3-(imidazol-4-yl)-2-oxopropyl phosphate + H2O. It participates in amino-acid biosynthesis; L-histidine biosynthesis; L-histidine from 5-phospho-alpha-D-ribose 1-diphosphate: step 6/9. In Candida glabrata (strain ATCC 2001 / BCRC 20586 / JCM 3761 / NBRC 0622 / NRRL Y-65 / CBS 138) (Yeast), this protein is Imidazoleglycerol-phosphate dehydratase (HIS3).